The primary structure comprises 192 residues: Crossover junction endodeoxyribonuclease RuvC (192 aa).

Active-site residues include D7, E67, and D140. Residues D7, E67, and D140 each contribute to the Mg(2+) site. The tract at residues 158–192 is disordered; sequence RQSGVPPRTNSRRKSGTGGSWEQFVRQSPNVVVRS. Positions 182–192 are enriched in polar residues; sequence VRQSPNVVVRS.

The protein belongs to the RuvC family. In terms of assembly, homodimer which binds Holliday junction (HJ) DNA. The HJ becomes 2-fold symmetrical on binding to RuvC with unstacked arms; it has a different conformation from HJ DNA in complex with RuvA. In the full resolvosome a probable DNA-RuvA(4)-RuvB(12)-RuvC(2) complex forms which resolves the HJ. Mg(2+) is required as a cofactor.

Its subcellular location is the cytoplasm. The catalysed reaction is Endonucleolytic cleavage at a junction such as a reciprocal single-stranded crossover between two homologous DNA duplexes (Holliday junction).. Its function is as follows. The RuvA-RuvB-RuvC complex processes Holliday junction (HJ) DNA during genetic recombination and DNA repair. Endonuclease that resolves HJ intermediates. Cleaves cruciform DNA by making single-stranded nicks across the HJ at symmetrical positions within the homologous arms, yielding a 5'-phosphate and a 3'-hydroxyl group; requires a central core of homology in the junction. The consensus cleavage sequence is 5'-(A/T)TT(C/G)-3'. Cleavage occurs on the 3'-side of the TT dinucleotide at the point of strand exchange. HJ branch migration catalyzed by RuvA-RuvB allows RuvC to scan DNA until it finds its consensus sequence, where it cleaves and resolves the cruciform DNA. This chain is Crossover junction endodeoxyribonuclease RuvC, found in Chlorobium chlorochromatii (strain CaD3).